Consider the following 897-residue polypeptide: Interference hedgehog (897 aa).

Residues 1–26 (MSVTRGHKSTPSLLLLFLSVLTSLLA) form the signal peptide. At 27–702 (AIPVLQANAP…THNETFNMNP (676 aa)) the chain is on the extracellular side. Ig-like C2-type domains are found at residues 40–147 (PGVR…ATIS), 148–235 (GDKI…RRLE), 244–336 (PSAA…YIQL), and 342–429 (PRIV…LQVN). Intrachain disulfides connect Cys63–Cys125, Cys169–Cys217, and Cys272–Cys320. N-linked (GlcNAc...) asparagine glycosylation is found at Asn96 and Asn99. N-linked (GlcNAc...) asparagine glycans are attached at residues Asn296, Asn351, Asn393, and Asn467. Residues Cys363 and Cys411 are joined by a disulfide bond. The tract at residues 434–468 (QAGDGMGTGGMGRSSNRNAHNRKQKQMVPPSAPNV) is disordered. Fibronectin type-III domains lie at 462–571 (PPSA…LQRG) and 579–674 (VPEL…TQRP). Arg498, Lys504, and Lys506 together coordinate heparin. The N-linked (GlcNAc...) asparagine glycan is linked to Asn530. Arg545 is a heparin binding site. Asn561 carries an N-linked (GlcNAc...) asparagine glycan. Polar residues predominate over residues 666–682 (LKQGRTQRPRSSTTAQP). Residues 666–694 (LKQGRTQRPRSSTTAQPTMHTVDTTTPTH) are disordered. The segment covering 683 to 694 (TMHTVDTTTPTH) has biased composition (low complexity). A glycan (N-linked (GlcNAc...) asparagine) is linked at Asn695. Residues 703-723 (LLTGTISGGALLILLVISACL) form a helical membrane-spanning segment. At 724 to 897 (CLCKRRHSRG…SSGSLNSVGV (174 aa)) the chain is on the cytoplasmic side. Disordered stretches follow at residues 773–793 (AQQQ…DSQD) and 819–849 (MSSS…NLNQ). Residues 774-784 (QQQQQQLQQQH) show a composition bias toward low complexity.

The protein belongs to the immunoglobulin superfamily. IHOG family. As to quaternary structure, homodimer. Heterotetramer; 2 iHog chains bind 2 hh chains when facilitated by heparin, heparin is required to promote high-affinity interactions between hh and iHog.

The protein localises to the membrane. In terms of biological role, mediates response to the active Hedgehog (Hh) protein signal in embryos, functioning upstream or at the level of patched (ptc). This is Interference hedgehog from Drosophila mojavensis (Fruit fly).